A 337-amino-acid chain; its full sequence is tRNA N6-adenosine threonylcarbamoyltransferase (337 aa).

2 residues coordinate Fe cation: His114 and His118. Residues 136–140, Asp169, Gly182, Asp186, and Asn275 each bind substrate; that span reads LVSGG. Asp301 contacts Fe cation.

It belongs to the KAE1 / TsaD family. Requires Fe(2+) as cofactor.

The protein localises to the cytoplasm. It catalyses the reaction L-threonylcarbamoyladenylate + adenosine(37) in tRNA = N(6)-L-threonylcarbamoyladenosine(37) in tRNA + AMP + H(+). Functionally, required for the formation of a threonylcarbamoyl group on adenosine at position 37 (t(6)A37) in tRNAs that read codons beginning with adenine. Is involved in the transfer of the threonylcarbamoyl moiety of threonylcarbamoyl-AMP (TC-AMP) to the N6 group of A37, together with TsaE and TsaB. TsaD likely plays a direct catalytic role in this reaction. This is tRNA N6-adenosine threonylcarbamoyltransferase from Streptococcus thermophilus (strain CNRZ 1066).